The following is a 450-amino-acid chain: Guanine deaminase (450 aa).

Histidine 88 and histidine 90 together coordinate Zn(2+). Substrate is bound by residues 90–93, 218–219, 245–248, and aspartate 335; these read HAPQ, RF, and HLSE. Zn(2+) is bound by residues histidine 245 and aspartate 335.

Belongs to the metallo-dependent hydrolases superfamily. ATZ/TRZ family. Zn(2+) serves as cofactor.

It carries out the reaction guanine + H2O + H(+) = xanthine + NH4(+). Its pathway is purine metabolism; guanine degradation; xanthine from guanine: step 1/1. Its function is as follows. Catalyzes the hydrolytic deamination of guanine, producing xanthine and ammonia. The chain is Guanine deaminase (guaD) from Dictyostelium discoideum (Social amoeba).